The chain runs to 208 residues: Small ribosomal subunit protein eS1 (208 aa).

This sequence belongs to the eukaryotic ribosomal protein eS1 family.

In Saccharolobus islandicus (strain Y.N.15.51 / Yellowstone #2) (Sulfolobus islandicus), this protein is Small ribosomal subunit protein eS1.